A 23-amino-acid chain; its full sequence is Cytochrome c oxidase subunit 7A1, mitochondrial (23 aa).

The protein belongs to the cytochrome c oxidase VIIa family. In terms of assembly, component of the complex IV (CIV, cytochrome c oxidase), a multisubunit enzyme composed of 14 subunits. The complex is composed of a catalytic core of 3 subunits MT-CO1, MT-CO2 and MT-CO3, encoded in the mitochondrial DNA, and 11 supernumerary subunits COX4I1 (or COX4I2), COX5A, COX5B, COX6A2 (or COX6A1), COX6B1 (or COX6B2), COX6C, COX7A1 (or COX7A2), COX7B, COX7C, COX8B and NDUFA4, which are encoded in the nuclear genome. The complex exists as a monomer or a dimer and forms supercomplexes (SCs) in the inner mitochondrial membrane with NADH-ubiquinone oxidoreductase (complex I, CI) and ubiquinol-cytochrome c oxidoreductase (cytochrome b-c1 complex, complex III, CIII), resulting in different assemblies (supercomplex SCI(1)III(2)IV(1) and megacomplex MCI(2)III(2)IV(2)).

The protein resides in the mitochondrion inner membrane. It participates in energy metabolism; oxidative phosphorylation. In terms of biological role, component of the mitochondrial respiratory complex IV (CIV, also named cytochrome c oxidase complex), the last enzyme in the mitochondrial electron transport chain which drives oxidative phosphorylation. The CIV complex is the component of the respiratory chain that catalyzes the reduction of oxygen to water. Acts as an assembly factor that specifically drives the homodimerization of CIV complexes, mediating the formation of mitochondrial respiratory supercomplexes (respirasomes) containing two CIV: supercomplxes with two molecules of CIV show improved activity. Despite being highly expressed in brown adipose tissue, not required for thermogenesis. The protein is Cytochrome c oxidase subunit 7A1, mitochondrial (COX7A1) of Canis lupus familiaris (Dog).